We begin with the raw amino-acid sequence, 369 residues long: Anhydro-N-acetylmuramic acid kinase (369 aa).

Glycine 12–aspartate 19 is an ATP binding site.

It belongs to the anhydro-N-acetylmuramic acid kinase family.

The catalysed reaction is 1,6-anhydro-N-acetyl-beta-muramate + ATP + H2O = N-acetyl-D-muramate 6-phosphate + ADP + H(+). It participates in amino-sugar metabolism; 1,6-anhydro-N-acetylmuramate degradation. It functions in the pathway cell wall biogenesis; peptidoglycan recycling. Catalyzes the specific phosphorylation of 1,6-anhydro-N-acetylmuramic acid (anhMurNAc) with the simultaneous cleavage of the 1,6-anhydro ring, generating MurNAc-6-P. Is required for the utilization of anhMurNAc either imported from the medium or derived from its own cell wall murein, and thus plays a role in cell wall recycling. This chain is Anhydro-N-acetylmuramic acid kinase, found in Shewanella pealeana (strain ATCC 700345 / ANG-SQ1).